Consider the following 148-residue polypeptide: HTH-type transcriptional regulator BilQ (148 aa).

An HTH marR-type domain is found at 1–140; sequence MDFKNLQYES…LVKNLHVVKD (140 aa). A DNA-binding region (H-T-H motif) is located at residues 54–77; sequence LNDVSTEFEVDKAHTTRTISRLEQ.

Its function is as follows. Transcription regulator that regulates expression of the bilirubin reductase operon (bilQ, bilR and bilS). This chain is HTH-type transcriptional regulator BilQ, found in Clostridioides difficile (strain CD3).